The chain runs to 200 residues: Cleavage and polyadenylation specificity factor subunit 5 (200 aa).

The region spanning 45-170 (LRKAVEGIII…LSLIAVSLYE (126 aa)) is the Nudix hydrolase domain. The interaction with RNA stretch occupies residues 70 to 72 (NYF). A Nudix box motif is present at residues 77-98 (GKLKPGENEIDGLIRKLTKKLS).

Belongs to the Nudix hydrolase family. CPSF5 subfamily. Homodimer (via N- and C-terminus); binds RNA as homodimer. Component of the cleavage factor Im (CFIm) complex.

It is found in the nucleus. The protein localises to the cytoplasm. Its function is as follows. Component of the cleavage factor Im (CFIm) complex that functions as an activator of the pre-mRNA 3'-end cleavage and polyadenylation processing required for the maturation of pre-mRNA into functional mRNAs. CFIm contributes to the recruitment of multiprotein complexes on specific sequences on the pre-mRNA 3'-end, so called cleavage and polyadenylation signals (pA signals). Most pre-mRNAs contain multiple pA signals, resulting in alternative cleavage and polyadenylation (APA) producing mRNAs with variable 3'-end formation. The CFIm complex acts as a key regulator of cleavage and polyadenylation site choice during APA through its binding to 5'-UGUA-3' elements localized in the 3'-untranslated region (UTR) for a huge number of pre-mRNAs. Binds to 5'-UGUA-3' elements localized upstream of pA signals that act as enhancers of pre-mRNA 3'-end processing. The homodimer mediates simultaneous sequence-specific recognition of two 5'-UGUA-3' elements within the pre-mRNA. Plays a role in somatic cell fate transitions and pluripotency by regulating widespread changes in gene expression through an APA-dependent function. Binds to chromatin. This chain is Cleavage and polyadenylation specificity factor subunit 5, found in Dictyostelium discoideum (Social amoeba).